The chain runs to 130 residues: Transcription antitermination protein NusB (130 aa).

This sequence belongs to the NusB family.

Functionally, involved in transcription antitermination. Required for transcription of ribosomal RNA (rRNA) genes. Binds specifically to the boxA antiterminator sequence of the ribosomal RNA (rrn) operons. This Sulfurovum sp. (strain NBC37-1) protein is Transcription antitermination protein NusB.